The primary structure comprises 239 residues: MPALRFPSRLTEGRLVRRYKRFLADVELADGRLVTAHCANPGAMLGLAAPGRPVLLSAATSPGRKLAWSWEMVEADLPGGPQWVGINTMRPNHLVAEAFREGRLPALAGVTSLRPEVRYGRASRVDFLAEHPAGPIHVEVKNCHMMRDAGLAEFPDCIAARSARHMEELAAVVRGGGRAMVIVVVQMRAGRFTVAGDVDPAFAASFRRAQEAGVATVAYRCRLDPDEVAIEAEIPMLPA.

The protein belongs to the SfsA family.

The protein is Sugar fermentation stimulation protein homolog of Methylobacterium sp. (strain 4-46).